A 242-amino-acid polypeptide reads, in one-letter code: Ribonuclease 3 (242 aa).

The RNase III domain maps to Ala-18 to Gly-146. Mg(2+) is bound at residue Glu-59. Asp-63 is an active-site residue. Residues Asp-132 and Glu-135 each coordinate Mg(2+). The active site involves Glu-135. Positions Asn-172–Leu-241 constitute a DRBM domain. The segment covering Arg-218–Ala-227 has biased composition (basic and acidic residues). The interval Arg-218–Pro-242 is disordered.

This sequence belongs to the ribonuclease III family. In terms of assembly, homodimer. Requires Mg(2+) as cofactor.

The protein resides in the cytoplasm. It catalyses the reaction Endonucleolytic cleavage to 5'-phosphomonoester.. Functionally, digests double-stranded RNA. Involved in the processing of primary rRNA transcript to yield the immediate precursors to the large and small rRNAs (23S and 16S). Processes some mRNAs, and tRNAs when they are encoded in the rRNA operon. Processes pre-crRNA and tracrRNA of type II CRISPR loci if present in the organism. The chain is Ribonuclease 3 from Protochlamydia amoebophila (strain UWE25).